The primary structure comprises 69 residues: Large ribosomal subunit protein uL29 (69 aa).

The protein belongs to the universal ribosomal protein uL29 family.

In Parasynechococcus marenigrum (strain WH8102), this protein is Large ribosomal subunit protein uL29.